Reading from the N-terminus, the 245-residue chain is CMRF35-like molecule 3 (245 aa).

Positions 1-18 (MWQFPALLFLFLPGCCTA) are cleaved as a signal peptide. The Ig-like V-type domain maps to 19-124 (QDPVTGPEEV…TDPMFKVNVN (106 aa)). The Extracellular segment spans residues 19–189 (QDPVTGPEEV…FIWSLLSSIS (171 aa)). The cysteines at positions 40 and 108 are disulfide-linked. Important for maintaining surface expression and for interaction with FCER1G regions lie at residues 177–182 (NSLFIW) and 189–198 (SFLLMVFVVV). Residues 190–210 (FLLMVFVVVPLLLSMLSAVLW) traverse the membrane as a helical segment. At 211 to 245 (VNRPQRHYGGGEIGLVETHRSDALDGEKHFPGDEK) the chain is on the cytoplasmic side.

Belongs to the CD300 family. In terms of assembly, interacts with FCER1G; the interaction may be indirect. Interacts with TLR9. In terms of tissue distribution, highly expressed in bone marrow-derived mast cells and macrophages, peripheral blood monocytes and CD11c+ cells, with weaker expression detected in CD11b cells in bone marrow and peripheral blood. Not detected in B220+ cells in bone marrow or spleen, in Thy-1.2+ or CD3+ cells in peripheral blood, spleen or thymus, or in NK1.1+ cells in spleen (at protein level). Widely expressed in various tissues including heart, liver, spleen, lung, kidney, brain, bone marrow, thymus, axillary lymph node and mesenteric lymph node. Highly expressed in macrophage cell lines J774.1 and RAW 264.7 and in mast cell line MC/9. Weak expression detected in B-lineage cell lines WEHI-231 and A20 and in dendritic cell line DC2.4. Not detected in other myeloid cell lines or T-lineage cell lines.

It is found in the cell membrane. It localises to the early endosome. The protein resides in the lysosome. Acts as an activating receptor inducing cytokine production in mast cells. Can act as a positive regulator of TLR9 signaling in macrophages, leading to enhanced production of pro-inflammatory cytokines. The polypeptide is CMRF35-like molecule 3 (Mus musculus (Mouse)).